The sequence spans 301 residues: Cardiolipin synthase (CMP-forming) (301 aa).

The segment at 70-93 (SGAGKAAPRPAAGAGAAAEAPGGQ) is disordered. Positions 71–93 (GAGKAAPRPAAGAGAAAEAPGGQ) are enriched in low complexity. Transmembrane regions (helical) follow at residues 109–129 (IPNM…YLII), 133–153 (FNIA…DGFI), 190–212 (IPVP…VFYV), 250–270 (LILV…SIYL), and 272–292 (ILWC…YHYG).

This sequence belongs to the CDP-alcohol phosphatidyltransferase class-I family. It depends on a divalent metal cation as a cofactor. In terms of tissue distribution, highly expressed in tissues such as heart, skeletal muscle and liver.

The protein localises to the mitochondrion inner membrane. It catalyses the reaction a CDP-1,2-diacyl-sn-glycerol + a 1,2-diacyl-sn-glycero-3-phospho-(1'-sn-glycerol) = a cardiolipin + CMP + H(+). Catalyzes the synthesis of cardiolipin (CL) (diphosphatidylglycerol) by specifically transferring a phosphatidyl group from CDP-diacylglycerol to phosphatidylglycerol (PG). CL is a key phospholipid in mitochondrial membranes and plays important roles in maintaining the functional integrity and dynamics of mitochondria under both optimal and stress conditions. The chain is Cardiolipin synthase (CMP-forming) (CRLS1) from Homo sapiens (Human).